The sequence spans 297 residues: tRNA-cytidine(32) 2-sulfurtransferase (297 aa).

Residues 61-66 (SGGKDS) carry the PP-loop motif motif. [4Fe-4S] cluster is bound by residues Cys-136, Cys-139, and Cys-227.

The protein belongs to the TtcA family. As to quaternary structure, homodimer. Mg(2+) serves as cofactor. The cofactor is [4Fe-4S] cluster.

It is found in the cytoplasm. The catalysed reaction is cytidine(32) in tRNA + S-sulfanyl-L-cysteinyl-[cysteine desulfurase] + AH2 + ATP = 2-thiocytidine(32) in tRNA + L-cysteinyl-[cysteine desulfurase] + A + AMP + diphosphate + H(+). Its pathway is tRNA modification. In terms of biological role, catalyzes the ATP-dependent 2-thiolation of cytidine in position 32 of tRNA, to form 2-thiocytidine (s(2)C32). The sulfur atoms are provided by the cysteine/cysteine desulfurase (IscS) system. The protein is tRNA-cytidine(32) 2-sulfurtransferase of Paracoccus denitrificans (strain Pd 1222).